The primary structure comprises 147 residues: Methylglyoxal synthase (147 aa).

Residues 1-147 (MKGQRNIGMV…TPYVKRLGAK (147 aa)) form the MGS-like domain. Residues H12, K16, 38 to 41 (TGTT), and 59 to 60 (SG) contribute to the substrate site. D65 serves as the catalytic Proton donor/acceptor. Substrate is bound at residue H92.

The protein belongs to the methylglyoxal synthase family.

It catalyses the reaction dihydroxyacetone phosphate = methylglyoxal + phosphate. Catalyzes the formation of methylglyoxal from dihydroxyacetone phosphate. This is Methylglyoxal synthase from Oleidesulfovibrio alaskensis (strain ATCC BAA-1058 / DSM 17464 / G20) (Desulfovibrio alaskensis).